Reading from the N-terminus, the 333-residue chain is Leukocyte cell-derived chemotaxin 1 (333 aa).

Residues 42–62 traverse the membrane as a helical segment; that stretch reads VGAVVLISGAVLLLFGAIGAF. One can recognise a BRICHOS domain in the interval 104–201; sequence GSGAEEAIEV…LCGDLPIFWL (98 aa). The cysteines at positions 131 and 193 are disulfide-linked. The propeptide occupies 211–214; it reads RERR. Residues 212-269 form a disordered region; that stretch reads ERREVVRKTVPTTTKRPHSGPRGNPGPARMRNDSRPSVQEDSEPFNPDNPYHQEGESM. Asn243 is a glycosylation site (N-linked (GlcNAc...) asparagine). Cystine bridges form between Cys281–Cys285, Cys282–Cys322, Cys292–Cys316, and Cys296–Cys312.

Belongs to the chondromodulin-1 family. In terms of processing, after cleavage, the post-translationally modified ChM-I is secreted as a glycoprotein.

The protein resides in the secreted. Its subcellular location is the extracellular space. It is found in the extracellular matrix. It localises to the endomembrane system. Functionally, bifunctional growth regulator that stimulates the growth of cultured chondrocytes in the presence of basic fibroblast growth factor (FGF) but inhibits the growth of cultured vascular endothelial cells. May contribute to the rapid growth of cartilage and vascular invasion prior to the replacement of cartilage by bone during endochondral bone development. Inhibits in vitro tube formation and mobilization of endothelial cells. Plays a role as antiangiogenic factor in cardiac valves to suppress neovascularization. This chain is Leukocyte cell-derived chemotaxin 1, found in Oryctolagus cuniculus (Rabbit).